The following is a 506-amino-acid chain: ATP synthase subunit alpha (506 aa).

Gly-169–Thr-176 lines the ATP pocket.

The protein belongs to the ATPase alpha/beta chains family. In terms of assembly, F-type ATPases have 2 components, CF(1) - the catalytic core - and CF(0) - the membrane proton channel. CF(1) has five subunits: alpha(3), beta(3), gamma(1), delta(1), epsilon(1). CF(0) has three main subunits: a(1), b(2) and c(9-12). The alpha and beta chains form an alternating ring which encloses part of the gamma chain. CF(1) is attached to CF(0) by a central stalk formed by the gamma and epsilon chains, while a peripheral stalk is formed by the delta and b chains.

The protein localises to the cell membrane. The catalysed reaction is ATP + H2O + 4 H(+)(in) = ADP + phosphate + 5 H(+)(out). Functionally, produces ATP from ADP in the presence of a proton gradient across the membrane. The alpha chain is a regulatory subunit. The protein is ATP synthase subunit alpha of Symbiobacterium thermophilum (strain DSM 24528 / JCM 14929 / IAM 14863 / T).